A 442-amino-acid chain; its full sequence is Ribosomal protein uS12 methylthiotransferase RimO (442 aa).

The 111-residue stretch at 8–118 (PKVGFVSLGC…VLGHVHKYVA (111 aa)) folds into the MTTase N-terminal domain. Residues Cys17, Cys53, Cys82, Cys150, Cys154, and Cys157 each contribute to the [4Fe-4S] cluster site. A Radical SAM core domain is found at 136–373 (LTPRHYAYLK…MELQQQVSIR (238 aa)). A TRAM domain is found at 376–442 (ARKVGKEMTV…EYDLWASLIG (67 aa)).

This sequence belongs to the methylthiotransferase family. RimO subfamily. [4Fe-4S] cluster is required as a cofactor.

It is found in the cytoplasm. The enzyme catalyses L-aspartate(89)-[ribosomal protein uS12]-hydrogen + (sulfur carrier)-SH + AH2 + 2 S-adenosyl-L-methionine = 3-methylsulfanyl-L-aspartate(89)-[ribosomal protein uS12]-hydrogen + (sulfur carrier)-H + 5'-deoxyadenosine + L-methionine + A + S-adenosyl-L-homocysteine + 2 H(+). Its function is as follows. Catalyzes the methylthiolation of an aspartic acid residue of ribosomal protein uS12. This chain is Ribosomal protein uS12 methylthiotransferase RimO, found in Aeromonas salmonicida (strain A449).